Reading from the N-terminus, the 202-residue chain is T-cell surface glycoprotein CD3 epsilon chain (202 aa).

The signal sequence occupies residues 1-21 (MQSRNLWRILGLCLLSVGAWG). Over 22–122 (QDEDFKASDD…VCANCIEVNL (101 aa)) the chain is Extracellular. The 71-residue stretch at 37 to 107 (PEKRFKVSIS…ADSIKEKSYL (71 aa)) folds into the Ig-like domain. The cysteines at positions 54 and 96 are disulfide-linked. Residues 123 to 143 (MAVVTIIVADICLTLGLLLMV) form a helical membrane-spanning segment. At 144–202 (YYWSKTRKANAKPVMRGTGAGSRPRGQNKEKPPPVPNPDYEPIRKGQQDLYSGLNQRGI) the chain is on the cytoplasmic side. The interval 156-202 (PVMRGTGAGSRPRGQNKEKPPPVPNPDYEPIRKGQQDLYSGLNQRGI) is disordered. The tract at residues 170-187 (QNKEKPPPVPNPDYEPIR) is NUMB-binding region. Residues 173–200 (EKPPPVPNPDYEPIRKGQQDLYSGLNQR) enclose the ITAM domain. Residues 174–181 (KPPPVPNP) are proline-rich sequence. Phosphotyrosine occurs at positions 183 and 194. Over residues 192-202 (DLYSGLNQRGI) the composition is skewed to polar residues.

As to quaternary structure, the TCR-CD3 complex is composed of a CD3D/CD3E and a CD3G/CD3E heterodimers that preferentially associate with TCRalpha and TCRbeta, respectively, to form TCRalpha/CD3E/CD3G and TCRbeta/CD3G/CD3E trimers. In turn, the hexamer interacts with CD3Z homodimer to form the TCR-CD3 complex. Alternatively, TCRalpha and TCRbeta can be replaced by TCRgamma and TCRdelta. Interacts with CD6. Interacts (via Proline-rich sequence) with NCK1; the interaction is ligand dependent but independent of tyrosine kinase activation. Post-translationally, phosphorylated on Tyr residues after T-cell receptor triggering by LCK in association with CD4/CD8.

The protein resides in the cell membrane. In terms of biological role, part of the TCR-CD3 complex present on T-lymphocyte cell surface that plays an essential role in adaptive immune response. When antigen presenting cells (APCs) activate T-cell receptor (TCR), TCR-mediated signals are transmitted across the cell membrane by the CD3 chains CD3D, CD3E, CD3G and CD3Z. All CD3 chains contain immunoreceptor tyrosine-based activation motifs (ITAMs) in their cytoplasmic domain. Upon TCR engagement, these motifs become phosphorylated by Src family protein tyrosine kinases LCK and FYN, resulting in the activation of downstream signaling pathways. In addition of this role of signal transduction in T-cell activation, CD3E plays an essential role in correct T-cell development. Also participates in internalization and cell surface down-regulation of TCR-CD3 complexes via endocytosis sequences present in CD3E cytosolic region. In addition to its role as a TCR coreceptor, it serves as a receptor for ITPRIPL1. Ligand recognition inhibits T-cell activation by promoting interaction with NCK1, which prevents CD3E-ZAP70 interaction and blocks the ERK-NFkB signaling cascade and calcium influx. The chain is T-cell surface glycoprotein CD3 epsilon chain (CD3E) from Canis lupus familiaris (Dog).